Here is a 227-residue protein sequence, read N- to C-terminus: MIRLILTDVDGTLTFDRDTYNIDLDAVDLLRKVEKKGIKVGLVSGNSYPVLRALYTYFGFNGGIVAENGCIVYYDNQLKEVCERVERSLISEFENRFGVKGSWQNQFKVCDFSFYPPILKDEMVKWALDKGLYIKTSGYAVHISKSKRGKAEGVRELIKMHGLDKAEVVGIGDSSTDIEFLEEVGIRVVVGNADESLKSIGDFVMREKSGKAVVEFIKKVITGEINE.

D8 (nucleophile) is an active-site residue. Mg(2+)-binding residues include D8 and D10. K150 provides a ligand contact to substrate. D173 and D177 together coordinate Mg(2+).

This sequence belongs to the archaeal SPP-like hydrolase family. It depends on Mg(2+) as a cofactor.

The catalysed reaction is 2-phosphoglycolate + H2O = glycolate + phosphate. Catalyzes the dephosphorylation of 2-phosphoglycolate. The sequence is that of Phosphoglycolate phosphatase from Sulfolobus acidocaldarius (strain ATCC 33909 / DSM 639 / JCM 8929 / NBRC 15157 / NCIMB 11770).